We begin with the raw amino-acid sequence, 346 residues long: Outer membrane protein A (346 aa).

Positions 1–21 are cleaved as a signal peptide; sequence MKKTAIAIAVALAGFATVAQA. The next 8 membrane-spanning stretches (beta stranded) occupy residues 27-37, 55-66, 70-78, 96-107, 112-120, 142-151, 156-163, and 182-190; these read TWYTGAKLGWS, QLGAGAFGGYQV, VGFEMGYDW, QGVQLTAKLGYP, LDIYTRLGG, PVFAGGVEYA, IATRLEYQ, and MLSLGVSYR. Positions 197 to 208 are hinge-like; it reads APVVAPAPAPAP. A run of 4 repeats spans residues 201-202, 203-204, 205-206, and 207-208. Residues 201–208 are 4 X 2 AA tandem repeats of A-P; that stretch reads APAPAPAP. The region spanning 210 to 338 is the OmpA-like domain; the sequence is VQTKHFTLKS…RVEIEVKGIK (129 aa). Residues Cys311 and Cys323 are joined by a disulfide bond.

Belongs to the outer membrane OOP (TC 1.B.6) superfamily. OmpA family. As to quaternary structure, monomer and homodimer.

The protein localises to the cell outer membrane. In terms of biological role, with TolR probably plays a role in maintaining the position of the peptidoglycan cell wall in the periplasm. Acts as a porin with low permeability that allows slow penetration of small solutes; an internal gate slows down solute passage. Required for conjugation with F-type plasmids; probably serves as the mating receptor on recipient cells. This chain is Outer membrane protein A, found in Escherichia coli O157:H7.